The primary structure comprises 234 residues: Thiamine-phosphate synthase (234 aa).

Residues 65 to 69 (QYRNK) and N97 each bind 4-amino-2-methyl-5-(diphosphooxymethyl)pyrimidine. Positions 98 and 117 each coordinate Mg(2+). S136 is a binding site for 4-amino-2-methyl-5-(diphosphooxymethyl)pyrimidine. Position 163 to 165 (163 to 165 (SHT)) interacts with 2-[(2R,5Z)-2-carboxy-4-methylthiazol-5(2H)-ylidene]ethyl phosphate. 4-amino-2-methyl-5-(diphosphooxymethyl)pyrimidine is bound at residue K166. Residues G192 and 212–213 (IS) each bind 2-[(2R,5Z)-2-carboxy-4-methylthiazol-5(2H)-ylidene]ethyl phosphate.

It belongs to the thiamine-phosphate synthase family. Mg(2+) is required as a cofactor.

The catalysed reaction is 2-[(2R,5Z)-2-carboxy-4-methylthiazol-5(2H)-ylidene]ethyl phosphate + 4-amino-2-methyl-5-(diphosphooxymethyl)pyrimidine + 2 H(+) = thiamine phosphate + CO2 + diphosphate. It carries out the reaction 2-(2-carboxy-4-methylthiazol-5-yl)ethyl phosphate + 4-amino-2-methyl-5-(diphosphooxymethyl)pyrimidine + 2 H(+) = thiamine phosphate + CO2 + diphosphate. The enzyme catalyses 4-methyl-5-(2-phosphooxyethyl)-thiazole + 4-amino-2-methyl-5-(diphosphooxymethyl)pyrimidine + H(+) = thiamine phosphate + diphosphate. Its pathway is cofactor biosynthesis; thiamine diphosphate biosynthesis; thiamine phosphate from 4-amino-2-methyl-5-diphosphomethylpyrimidine and 4-methyl-5-(2-phosphoethyl)-thiazole: step 1/1. Condenses 4-methyl-5-(beta-hydroxyethyl)thiazole monophosphate (THZ-P) and 2-methyl-4-amino-5-hydroxymethyl pyrimidine pyrophosphate (HMP-PP) to form thiamine monophosphate (TMP). In Xylella fastidiosa (strain 9a5c), this protein is Thiamine-phosphate synthase.